The chain runs to 262 residues: Putative phosphatase HI_0003 (262 aa).

Asp-9 functions as the Nucleophile in the catalytic mechanism. 2 residues coordinate Mg(2+): Asp-9 and Asn-11. Residues 43–44 (SA) and Lys-189 contribute to the phosphate site. Asp-212 is a binding site for Mg(2+). Position 215 (Asn-215) interacts with phosphate.

It belongs to the HAD-like hydrolase superfamily. Cof family. It depends on Mg(2+) as a cofactor.

In Haemophilus influenzae (strain ATCC 51907 / DSM 11121 / KW20 / Rd), this protein is Putative phosphatase HI_0003.